The following is a 121-amino-acid chain: Large ribosomal subunit protein bL12 (121 aa).

It belongs to the bacterial ribosomal protein bL12 family. As to quaternary structure, homodimer. Part of the ribosomal stalk of the 50S ribosomal subunit. Forms a multimeric L10(L12)X complex, where L10 forms an elongated spine to which 2 to 4 L12 dimers bind in a sequential fashion. Binds GTP-bound translation factors.

Functionally, forms part of the ribosomal stalk which helps the ribosome interact with GTP-bound translation factors. Is thus essential for accurate translation. The protein is Large ribosomal subunit protein bL12 of Limosilactobacillus fermentum (strain NBRC 3956 / LMG 18251) (Lactobacillus fermentum).